The chain runs to 1898 residues: Protein NYNRIN (1898 aa).

Disordered stretches follow at residues 289 to 315 (SNNQ…STNH), 424 to 450 (LPSA…CPRP), 467 to 533 (DVKD…TDQS), 618 to 691 (EPTT…TDAG), and 711 to 731 (VSLL…SGTL). Over residues 618–627 (EPTTPKTPQA) the composition is skewed to polar residues. A compositionally biased stretch (low complexity) spans 649-672 (PAATVSKAPAASKAPAAPKVPVTP). The RNase NYN domain maps to 792–942 (LRRVVIDGSS…LGRDGPTLDE (151 aa)). A disordered region spans residues 968–1019 (SASVTELSDDADSGPLESLPNMEEVREEKEERQDEEQRQGQGTQKAAEEDDL). The span at 990-1005 (EEVREEKEERQDEEQR) shows a compositional bias: basic and acidic residues. Positions 1304–1450 (LSTFVCIHMS…VDTLAKQGAQ (147 aa)) constitute an RNase H type-1 domain. 2 helical membrane passes run 1372 to 1392 (VVFL…LPLW) and 1408 to 1428 (PSLL…PFIY). One can recognise an Integrase catalytic domain in the interval 1609-1774 (RSTAPWSNLQ…ESRLTEPLWW (166 aa)).

Its subcellular location is the membrane. This Homo sapiens (Human) protein is Protein NYNRIN (NYNRIN).